Here is a 203-residue protein sequence, read N- to C-terminus: uncharacterized protein (203 aa).

Belongs to the DadA oxidoreductase family.

In terms of biological role, either a functional dehydrogenase or a non-functional fragment. This is an uncharacterized protein from Sinorhizobium fredii (strain NBRC 101917 / NGR234).